The primary structure comprises 409 residues: Phosphoserine phosphatase SerB2 (409 aa).

ACT domains follow at residues leucine 8 to aspartate 86 and glycine 102 to leucine 174. Catalysis depends on aspartate 185, which acts as the Nucleophile. Mg(2+) is bound by residues aspartate 185 and aspartate 187. Aspartate 187 acts as the Proton donor in catalysis. Substrate-binding positions include glutamate 194, arginine 230, serine 273–glycine 274, and lysine 318. Aspartate 341 contributes to the Mg(2+) binding site. Asparagine 344 contributes to the substrate binding site.

Belongs to the HAD-like hydrolase superfamily. SerB family. In terms of assembly, homodimer. The dimeric population shifts to a tetramer in the presence of L-serine, which inactivates the enzyme. It depends on Mg(2+) as a cofactor. The cofactor is Mn(2+).

Its subcellular location is the secreted. It localises to the host cytoplasm. The protein resides in the host cytosol. The catalysed reaction is O-phospho-L-serine + H2O = L-serine + phosphate. It catalyses the reaction O-phospho-D-serine + H2O = D-serine + phosphate. It carries out the reaction O-phospho-L-seryl-[protein] + H2O = L-seryl-[protein] + phosphate. The enzyme catalyses O-phospho-L-threonyl-[protein] + H2O = L-threonyl-[protein] + phosphate. It functions in the pathway amino-acid biosynthesis; L-serine biosynthesis; L-serine from 3-phospho-D-glycerate: step 3/3. Clofazimine, a drug being evaluated for XDR and MDR tuberculosis, inhibits SerB2 phosphatase activity and reverses the various functional effects described above and interactions with host proteins. Is inhibited by known PSP inhibitors such as chlorpromazine, DL-AP3 and sodium orthovanadate, but not by okadaic acid. By binding to the ACT domains, amino-acids have various effects on enzyme activity: L-serine and L-glycine act as inhibitors, whereas L-lysine, L-tyrosine and L-phenylalanine are activators. High throughput screen has been performed to identify specific PSP inhibitors with activity against intracellular bacteria; the two best hits identified in this screen, clorobiocin and rosaniline, are bactericidal and kill bacteria in infected macrophages in a dose-dependent manner. In terms of biological role, catalyzes the dephosphorylation of O-phospho-L-serine into L-serine, a step in the L-serine biosynthetic pathway. Exhibits high specificity for L-phosphoserine compared to substrates like L-phosphothreonine (5% relative activity) and L-phosphotyrosine (1.7% relative activity). Its function is as follows. In the host, induces significant cytoskeleton rearrangements through cofilin dephosphorylation and its subsequent activation, and affects the expression of genes that regulate actin dynamics. It specifically interacts with HSP90, HSP70 and HSP27 that block apoptotic pathways but not with other HSPs. Also interacts with GAPDH. It actively dephosphorylates MAP kinase p38 and NF-kappa B p65 (specifically at Ser-536) that play crucial roles in inflammatory and immune responses. This in turn leads to down-regulation of Interleukin 8, a chemotactic and inflammatory cytokine. Thus might help the pathogen to evade the host's immune response. Exogenous addition of purified SerB2 protein to human THP-1 cells (that can be differentiated into macrophage-like cells) induces microtubule rearrangements; the phosphatase activity is co-related to the elicited rearrangements, while addition of the ACT-domains alone elicits no rearrangements. The protein is Phosphoserine phosphatase SerB2 of Mycobacterium tuberculosis (strain ATCC 25618 / H37Rv).